A 710-amino-acid polypeptide reads, in one-letter code: Amyloid beta precursor protein binding family B member 1 (710 aa).

Position 135 is a phosphoserine (Ser135). Disordered regions lie at residues 143 to 256 and 276 to 300; these read EQGP…SDLP and GTTQ…ESQL. The span at 145–173 shows a compositional bias: acidic residues; sequence GPDEGEEKAAGEAEEDDEDEEEEEEEEDL. An N6-acetyllysine modification is found at Lys204. Residues 223–234 show a composition bias toward polar residues; that stretch reads SWATLSQGSPSY. Residues 253 to 285 form the WW domain; it reads SDLPAGWMRVQDTSGTYYWHIPTGTTQWEPPGR. The segment covering 287–299 has biased composition (low complexity); sequence SPSQGSSPQEESQ. The PID 1 domain occupies 370–509; that stretch reads FAVRSLGWVE…SKIMSERRNA (140 aa). At Ser459 the chain carries Phosphoserine; by PKC. Ser517 is subject to Phosphoserine. The 158-residue stretch at 542–699 folds into the PID 2 domain; it reads KFQVYYLGNV…RRGVQSLWGS (158 aa). Tyr547 carries the post-translational modification Phosphotyrosine; by ABL1. The residue at position 610 (Ser610) is a Phosphoserine; by SGK1. The residue at position 701 (Lys701) is an N6-acetyllysine.

As to quaternary structure, component of a complex, at least composed of APBB1, RASD1/DEXRAS1 and APP. Interacts (via PID domain 2) with APP (with the intracellular domain of the amyloid-beta precursor protein). Interacts (via PID domain 2) with RASD1/DEXRAS1; impairs the transcription activation activity. Interacts (via PID domain 1) with KAT5/TIP60. Interacts (via the WW domain) with the proline-rich region of APBB1IP. Interacts with TSHZ1 and TSHZ2. Interacts (via the WW domain) with histone H2AX (when phosphorylated on 'Tyr-142') and the proline-rich region of ENAH. Interacts with MAPK8. Interacts (via PID domain 1) with TSHZ3 (via homeobox domain). Interacts with SET. Found in a trimeric complex with HDAC1 and TSHZ3; the interaction between HDAC1 and APBB1 is mediated by TSHZ3. Interacts (via WWW domain) with NEK6. Interacts (via WWW domain) with ABL1. Interacts with RNF157. Interacts with ARF6. Polyubiquitination by RNF157 leads to degradation by the proteasome. In terms of processing, phosphorylation at Ser-610 by SGK1 promotes its localization to the nucleus. Phosphorylated following nuclear translocation. Phosphorylation at Tyr-546 by ABL1 enhances transcriptional activation activity and reduces the affinity for RASD1/DEXRAS1. Post-translationally, acetylation at Lys-204 and Lys-701 by KAT5 promotes its transcription activator activity. Phosphorylated at Ser-459 by PKC upon insulin activation. As to expression, expressed in the brain, retinal lens and muscle cells (at protein level).

It localises to the cell membrane. It is found in the cytoplasm. The protein resides in the nucleus. The protein localises to the cell projection. Its subcellular location is the growth cone. It localises to the nucleus speckle. Functionally, transcription coregulator that can have both coactivator and corepressor functions. Adapter protein that forms a transcriptionally active complex with the gamma-secretase-derived amyloid precursor protein (APP) intracellular domain. Plays a central role in the response to DNA damage by translocating to the nucleus and inducing apoptosis. May act by specifically recognizing and binding histone H2AX phosphorylated on 'Tyr-142' (H2AXY142ph) at double-strand breaks (DSBs), recruiting other pro-apoptosis factors such as MAPK8/JNK1. Required for histone H4 acetylation at double-strand breaks (DSBs). Its ability to specifically bind modified histones and chromatin modifying enzymes such as KAT5/TIP60, probably explains its transcription activation activity. Functions in association with TSHZ3, SET and HDAC factors as a transcriptional repressor, that inhibits the expression of CASP4. Associates with chromatin in a region surrounding the CASP4 transcriptional start site(s). Involved in hippocampal neurite branching and neuromuscular junction formation, as a result plays a role in spatial memory functioning. Plays a role in the maintenance of lens transparency. May play a role in muscle cell strength. Acts as a molecular adapter that functions in neurite outgrowth by activating the RAC1-ARF6 axis upon insulin treatment. In Mus musculus (Mouse), this protein is Amyloid beta precursor protein binding family B member 1.